A 630-amino-acid chain; its full sequence is Ubiquitin carboxyl-terminal hydrolase MINDY-2 (630 aa).

The tract at residues 1-209 (MESGPESLQP…RVPEEEEGAA (209 aa)) is disordered. Residues 24–33 (GSPQEGQQET) show a composition bias toward polar residues. Position 94 is a phosphoserine (serine 94). Low complexity-rich tracts occupy residues 141-163 (EESAAAGSSEPSSGGGLSSSCSD) and 170-191 (SPSLDSLESFSNLHSFPSSSEF). Residue cysteine 267 is the Nucleophile of the active site. Histidine 449 acts as the Proton acceptor in catalysis. Residues 508 to 560 (GQQDQIDQDYLMALSLQQEQQSQEINWEQIPEGISDLELAKKLQEEEDRRASQ) form a ubiquitin-binding domain (UBD) region. Over residues 564–599 (EQEQAAAAAASASASASASASTQAPQSQPVQASPSS) the composition is skewed to low complexity. Residues 564 to 630 (EQEQAAAAAA…EKEKNSCVIL (67 aa)) form a disordered region. The segment covering 606 to 630 (SERKRKEPREKDKEKEKEKNSCVIL) has biased composition (basic and acidic residues).

It belongs to the MINDY deubiquitinase family. FAM63 subfamily.

It catalyses the reaction Thiol-dependent hydrolysis of ester, thioester, amide, peptide and isopeptide bonds formed by the C-terminal Gly of ubiquitin (a 76-residue protein attached to proteins as an intracellular targeting signal).. Hydrolase that can remove 'Lys-48'-linked conjugated ubiquitin from proteins. Can also bind to polyubiquitin chains of different linkage types, including 'Lys-6', 'Lys-11', 'Lys-29', 'Lys-33' and 'Lys-63'. May play a regulatory role at the level of protein turnover. The protein is Ubiquitin carboxyl-terminal hydrolase MINDY-2 (MINDY2) of Bos taurus (Bovine).